Consider the following 354-residue polypeptide: Inactive ADP-ribosyltransferase ARH2 (354 aa).

Residue Ser27 is modified to Phosphoserine.

Belongs to the ADP-ribosylglycohydrolase family.

It localises to the cytoplasm. It is found in the myofibril. Its subcellular location is the sarcomere. Its function is as follows. Required for myofibril assembly and outgrowth of the cardiac chambers in the developing heart. Appears to be catalytically inactive, showing no activity against O-acetyl-ADP-ribose. The protein is Inactive ADP-ribosyltransferase ARH2 (ADPRHL1) of Bos taurus (Bovine).